We begin with the raw amino-acid sequence, 221 residues long: Serine/arginine-rich splicing factor 9 (221 aa).

2 RRM domains span residues 14 to 89 (GRIY…FPRT) and 111 to 187 (FRVL…PERS). A Glycyl lysine isopeptide (Lys-Gly) (interchain with G-Cter in SUMO2) cross-link involves residue Lys-36. The interaction with SAFB1 stretch occupies residues 188 to 200 (TSYGYSRSRSGSR). Ser-189 carries the post-translational modification Phosphoserine. Residues 189–198 (SYGYSRSRSG) are compositionally biased toward low complexity. The tract at residues 189–221 (SYGYSRSRSGSRGRDSPYQSRGSPHYFSPFRPY) is disordered. Tyr-192 carries the post-translational modification Phosphotyrosine. A phosphoserine mark is found at Ser-193, Ser-195, Ser-204, Ser-208, and Ser-211. Tyr-214 carries the post-translational modification Phosphotyrosine. At Ser-216 the chain carries Phosphoserine.

This sequence belongs to the splicing factor SR family. Interacts with KHDRBS3. Interacts with HABP4. Interacts with NOL3/ARC/NOP30. Interacts with NSEP1/YB-1/YB1. Interacts with SAFB/SAFB1. Interacts with SRSF6/SFRS6. Interacts with TRA2B/SFRS10. Interacts with C1QBP. May also interact with DUSP11/PIR1. Extensively phosphorylated on serine residues in the RS domain. In terms of tissue distribution, expressed at high levels in the heart, kidney, pancreas and placenta, and at lower levels in the brain, liver, lung and skeletal muscle.

It localises to the nucleus. Plays a role in constitutive splicing and can modulate the selection of alternative splice sites. Represses the splicing of MAPT/Tau exon 10. In Homo sapiens (Human), this protein is Serine/arginine-rich splicing factor 9 (SRSF9).